The primary structure comprises 432 residues: D-amino acid dehydrogenase (432 aa).

Residue 3-17 participates in FAD binding; sequence VLVLGSGVIGTASAY.

It belongs to the DadA oxidoreductase family. FAD is required as a cofactor.

It catalyses the reaction a D-alpha-amino acid + A + H2O = a 2-oxocarboxylate + AH2 + NH4(+). Its pathway is amino-acid degradation; D-alanine degradation; NH(3) and pyruvate from D-alanine: step 1/1. Its function is as follows. Oxidative deamination of D-amino acids. This chain is D-amino acid dehydrogenase, found in Ectopseudomonas mendocina (strain ymp) (Pseudomonas mendocina).